We begin with the raw amino-acid sequence, 330 residues long: Pyridoxal 5'-phosphate synthase subunit PdxS (330 aa).

Aspartate 23 contributes to the D-ribose 5-phosphate binding site. The Schiff-base intermediate with D-ribose 5-phosphate role is filled by lysine 80. A D-ribose 5-phosphate-binding site is contributed by glycine 152. Arginine 164 is a D-glyceraldehyde 3-phosphate binding site. Residues glycine 250 and 271–272 (GS) contribute to the D-ribose 5-phosphate site.

This sequence belongs to the PdxS/SNZ family. In the presence of PdxT, forms a dodecamer of heterodimers.

It catalyses the reaction aldehydo-D-ribose 5-phosphate + D-glyceraldehyde 3-phosphate + L-glutamine = pyridoxal 5'-phosphate + L-glutamate + phosphate + 3 H2O + H(+). It functions in the pathway cofactor biosynthesis; pyridoxal 5'-phosphate biosynthesis. Catalyzes the formation of pyridoxal 5'-phosphate from ribose 5-phosphate (RBP), glyceraldehyde 3-phosphate (G3P) and ammonia. The ammonia is provided by the PdxT subunit. Can also use ribulose 5-phosphate and dihydroxyacetone phosphate as substrates, resulting from enzyme-catalyzed isomerization of RBP and G3P, respectively. This chain is Pyridoxal 5'-phosphate synthase subunit PdxS, found in Methanocaldococcus jannaschii (strain ATCC 43067 / DSM 2661 / JAL-1 / JCM 10045 / NBRC 100440) (Methanococcus jannaschii).